A 413-amino-acid chain; its full sequence is MHFINEFINRGYFYQSTDLTRLTQISNSSQIVAYIGFDCTAQSLHVGNLMQIMILRLLQQCGHKSIVVIGGATTKIGDPSEKDKLRRIITNDEIQQNISGIKRSLKKFIKFDETKNDVLLLNNQEWLDSINYINFLRDYGRAFSVNKMLTMNSVKSRLERHTPLSFLEFNYMLLQAYDFYYLNKYYNCNLQIGGSDQWGNITMGVDLVKKLSNNEVFGLTTPLITNSSGEKMGKTADGAVWLNEDMCSPYNYFQYWRNIEDNDVIRFAKLYGEFSEVELSKLTELFFNNVNEAKKQIAYKITLLCHGRDEANKALNTAIQMFEHKKADENLPTFTIKDCNNLKVGIPITELLVTIGLAKTKSEGKRLIQGNGIRINNIKVNNINLVVQLHDFIDQVITVSLGKKCHILVKIAK.

Tyr-34 serves as a coordination point for L-tyrosine. Residues 39-48 (CTAQSLHVGN) carry the 'HIGH' region motif. L-tyrosine contacts are provided by Tyr-171 and Gln-175. The short motif at 231-235 (KMGKT) is the 'KMSKS' region element. Lys-234 is an ATP binding site. Positions 346–411 (IPITELLVTI…GKKCHILVKI (66 aa)) constitute an S4 RNA-binding domain.

Belongs to the class-I aminoacyl-tRNA synthetase family. TyrS type 1 subfamily. As to quaternary structure, homodimer.

The protein localises to the cytoplasm. The catalysed reaction is tRNA(Tyr) + L-tyrosine + ATP = L-tyrosyl-tRNA(Tyr) + AMP + diphosphate + H(+). Catalyzes the attachment of tyrosine to tRNA(Tyr) in a two-step reaction: tyrosine is first activated by ATP to form Tyr-AMP and then transferred to the acceptor end of tRNA(Tyr). The sequence is that of Tyrosine--tRNA ligase from Orientia tsutsugamushi (strain Ikeda) (Rickettsia tsutsugamushi).